A 282-amino-acid chain; its full sequence is NH(3)-dependent NAD(+) synthetase (282 aa).

Residue 51 to 58 coordinates ATP; that stretch reads GISGGVDS. Residue D57 coordinates Mg(2+). Position 148 (R148) interacts with deamido-NAD(+). Residue T168 coordinates ATP. E173 is a binding site for Mg(2+). 2 residues coordinate deamido-NAD(+): K181 and D188. Positions 197 and 219 each coordinate ATP. Residue 268–269 participates in deamido-NAD(+) binding; it reads HK.

It belongs to the NAD synthetase family. Homodimer.

It catalyses the reaction deamido-NAD(+) + NH4(+) + ATP = AMP + diphosphate + NAD(+) + H(+). It functions in the pathway cofactor biosynthesis; NAD(+) biosynthesis; NAD(+) from deamido-NAD(+) (ammonia route): step 1/1. Its function is as follows. Catalyzes the ATP-dependent amidation of deamido-NAD to form NAD. Uses ammonia as a nitrogen source. This chain is NH(3)-dependent NAD(+) synthetase, found in Burkholderia ambifaria (strain MC40-6).